We begin with the raw amino-acid sequence, 388 residues long: Staphopain A (388 aa).

The N-terminal stretch at 1–25 is a signal peptide; sequence MKRNFPKLIALSLIFSLSVTPIANA. The propeptide occupies 26-214; that stretch reads ESNSNIKAKD…TSQFKSNNYT (189 aa). Catalysis depends on residues Cys238, His334, and Asn355.

The protein belongs to the peptidase C47 family. In terms of assembly, in the cytoplasm, prematurely activated/folded ScpA forms a stable non-covalent complex with ScpB. Cleavage leads to the activation of ScpA probably by an auto-catalytic manner.

It is found in the secreted. It carries out the reaction Broad endopeptidase action on proteins including elastin, but rather limited hydrolysis of small-molecule substrates. Assays are conveniently made with hemoglobin, casein or Z-Phe-Arg-NHMec as substrate.. Prematurely activated/folded staphopain A is inhibited by staphostatin A (ScpB), which is probably required to protect staphylococcal cytoplasmic proteins from degradation by ScpA. In terms of biological role, cysteine protease that plays an important role in the inhibition of host innate immune response. Cleaves host elastins found in connective tissues, pulmonary surfactant protein A in the lungs, and the chemokine receptor CXCR2 on leukocytes. Proteolytic cleavage of surfactant protein A impairs bacterial phagocytosis by neutrophils while CXCR2 degradation blocks neutrophil activation and chemotaxis. Additionally, promotes vascular leakage by activating the plasma kallikerin/kinin system, resulting in hypotension. This chain is Staphopain A (sspP), found in Staphylococcus aureus (strain COL).